Reading from the N-terminus, the 372-residue chain is 3-isopropylmalate dehydrogenase (372 aa).

79-90 is an NAD(+) binding site; the sequence is GPKWQGGAVRPE. Substrate-binding residues include arginine 97, arginine 107, arginine 136, and aspartate 225. The Mg(2+) site is built by aspartate 225, aspartate 250, and aspartate 254. Position 289–300 (289–300) interacts with NAD(+); that stretch reads GSAPDLPAGKAN.

This sequence belongs to the isocitrate and isopropylmalate dehydrogenases family. In terms of assembly, homodimer. Mg(2+) serves as cofactor. It depends on Mn(2+) as a cofactor.

Its subcellular location is the cytoplasm. The catalysed reaction is (2R,3S)-3-isopropylmalate + NAD(+) = 4-methyl-2-oxopentanoate + CO2 + NADH. Its pathway is amino-acid biosynthesis; L-leucine biosynthesis; L-leucine from 3-methyl-2-oxobutanoate: step 3/4. In terms of biological role, catalyzes the oxidation of 3-carboxy-2-hydroxy-4-methylpentanoate (3-isopropylmalate) to 3-carboxy-4-methyl-2-oxopentanoate. The product decarboxylates to 4-methyl-2 oxopentanoate. This is 3-isopropylmalate dehydrogenase (LEU2) from Eremothecium gossypii (strain ATCC 10895 / CBS 109.51 / FGSC 9923 / NRRL Y-1056) (Yeast).